Consider the following 198-residue polypeptide: Probable GTP-binding protein EngB (198 aa).

The EngB-type G domain maps to 22–195 (GHPEIAFLGR…WSWLEQTAGL (174 aa)). GTP is bound by residues 30–37 (GRSNVGKS), 57–61 (GKTQT), 75–78 (DVPG), 142–145 (TKID), and 174–176 (FSA). 2 residues coordinate Mg(2+): Ser-37 and Thr-59.

Belongs to the TRAFAC class TrmE-Era-EngA-EngB-Septin-like GTPase superfamily. EngB GTPase family. It depends on Mg(2+) as a cofactor.

Functionally, necessary for normal cell division and for the maintenance of normal septation. The sequence is that of Probable GTP-binding protein EngB from Lacticaseibacillus paracasei (strain ATCC 334 / BCRC 17002 / CCUG 31169 / CIP 107868 / KCTC 3260 / NRRL B-441) (Lactobacillus paracasei).